The sequence spans 109 residues: Spermidine export protein MdtI (109 aa).

4 helical membrane passes run 6 to 26, 36 to 56, 63 to 83, and 88 to 108; these read WWHA…NILL, WMGI…AQAV, IAYA…GWIM, and LNYK…MIKM.

The protein belongs to the drug/metabolite transporter (DMT) superfamily. Small multidrug resistance (SMR) (TC 2.A.7.1) family. MdtI subfamily. Forms a complex with MdtJ.

The protein resides in the cell inner membrane. Its function is as follows. Catalyzes the excretion of spermidine. This chain is Spermidine export protein MdtI, found in Photorhabdus laumondii subsp. laumondii (strain DSM 15139 / CIP 105565 / TT01) (Photorhabdus luminescens subsp. laumondii).